Consider the following 180-residue polypeptide: ATP synthase subunit delta (180 aa).

This sequence belongs to the ATPase delta chain family. F-type ATPases have 2 components, F(1) - the catalytic core - and F(0) - the membrane proton channel. F(1) has five subunits: alpha(3), beta(3), gamma(1), delta(1), epsilon(1). F(0) has three main subunits: a(1), b(2) and c(10-14). The alpha and beta chains form an alternating ring which encloses part of the gamma chain. F(1) is attached to F(0) by a central stalk formed by the gamma and epsilon chains, while a peripheral stalk is formed by the delta and b chains.

It is found in the cell membrane. Its function is as follows. F(1)F(0) ATP synthase produces ATP from ADP in the presence of a proton or sodium gradient. F-type ATPases consist of two structural domains, F(1) containing the extramembraneous catalytic core and F(0) containing the membrane proton channel, linked together by a central stalk and a peripheral stalk. During catalysis, ATP synthesis in the catalytic domain of F(1) is coupled via a rotary mechanism of the central stalk subunits to proton translocation. In terms of biological role, this protein is part of the stalk that links CF(0) to CF(1). It either transmits conformational changes from CF(0) to CF(1) or is implicated in proton conduction. This chain is ATP synthase subunit delta, found in Dehalococcoides mccartyi (strain ATCC BAA-2266 / KCTC 15142 / 195) (Dehalococcoides ethenogenes (strain 195)).